Consider the following 139-residue polypeptide: Actin-depolymerizing factor 9 (139 aa).

In terms of domain architecture, ADF-H spans 7–139 (GLAVNDECKF…SLDIIRARAH (133 aa)).

This sequence belongs to the actin-binding proteins ADF family.

Its function is as follows. Actin-depolymerizing protein. Severs actin filaments (F-actin) and binds to actin monomers. In Oryza sativa subsp. japonica (Rice), this protein is Actin-depolymerizing factor 9 (ADF9).